Here is a 124-residue protein sequence, read N- to C-terminus: Small ribosomal subunit protein uS12 (124 aa).

Asp89 is modified (3-methylthioaspartic acid).

It belongs to the universal ribosomal protein uS12 family. Part of the 30S ribosomal subunit. Contacts proteins S8 and S17. May interact with IF1 in the 30S initiation complex.

Its function is as follows. With S4 and S5 plays an important role in translational accuracy. Functionally, interacts with and stabilizes bases of the 16S rRNA that are involved in tRNA selection in the A site and with the mRNA backbone. Located at the interface of the 30S and 50S subunits, it traverses the body of the 30S subunit contacting proteins on the other side and probably holding the rRNA structure together. The combined cluster of proteins S8, S12 and S17 appears to hold together the shoulder and platform of the 30S subunit. The polypeptide is Small ribosomal subunit protein uS12 (Nitratiruptor sp. (strain SB155-2)).